Here is a 359-residue protein sequence, read N- to C-terminus: Prostaglandin D2 receptor (359 aa).

Residues 1–21 (MKSPFYRCQNTTSVEKGNSAV) lie on the Extracellular side of the membrane. Asparagine 10 carries N-linked (GlcNAc...) asparagine glycosylation. A helical transmembrane segment spans residues 22–42 (MGGVLFSTGLLGNLLALGLLA). At 43-59 (RSGLGWCSRRPLRPLPS) the chain is on the cytoplasmic side. A helical transmembrane segment spans residues 60–80 (VFYMLVCGLTVTDLLGKCLLS). The Extracellular portion of the chain corresponds to 81-107 (PVVLAAYAQNRSLRVLAPALDNSLCQA). Asparagine 90 carries an N-linked (GlcNAc...) asparagine glycan. The cysteines at positions 105 and 183 are disulfide-linked. A helical transmembrane segment spans residues 108–128 (FAFFMSFFGLSSTLQLLAMAL). The Cytoplasmic portion of the chain corresponds to 129–150 (ECWLSLGHPFFYRRHITLRLGA). The helical transmembrane segment at 151 to 171 (LVAPVVSAFSLAFCALPFMGF) threads the bilayer. Residues 172 to 195 (GKFVQYCPGTWCFIQMVHEEGSLS) are Extracellular-facing. A helical transmembrane segment spans residues 196 to 216 (VLGYSVLYSSLMALLVLATVL). At 217–262 (CNLGAMRNLYAMHRRLQRHPRSCTRDCAEPRADGREASPQPLEELD) the chain is on the cytoplasmic side. A helical transmembrane segment spans residues 263–283 (HLLLLALMTVLFTMCSLPVIY). The Extracellular portion of the chain corresponds to 284–310 (RAYYGAFKDVKEKNRTSEEAEDLRALR). N-linked (GlcNAc...) asparagine glycosylation is present at asparagine 297. Residues 311-331 (FLSVISIVDPWIFIIFRSPVF) form a helical membrane-spanning segment. The Cytoplasmic portion of the chain corresponds to 332–359 (RIFFHKIFIRPLRYRSRCSNSTNMESSL).

It belongs to the G-protein coupled receptor 1 family. In terms of tissue distribution, expressed in retinal choroid, ciliary epithelium, longitudinal and circular ciliary muscles, iris, small intestine and platelet membranes.

It localises to the cell membrane. In terms of biological role, receptor for prostaglandin D2 (PGD2). The activity of this receptor is mainly mediated by G(s) proteins that stimulate adenylate cyclase, resulting in an elevation of intracellular cAMP. A mobilization of calcium is also observed, but without formation of inositol 1,4,5-trisphosphate. Involved in PLA2G3-dependent maturation of mast cells. PLA2G3 is secreted by immature mast cells and acts on nearby fibroblasts upstream to PTDGS to synthesize PGD2, which in turn promotes mast cell maturation and degranulation via PTGDR. In Homo sapiens (Human), this protein is Prostaglandin D2 receptor (PTGDR).